The sequence spans 279 residues: Pantothenate synthetase (279 aa).

ATP is bound at residue 31–38 (MGALHEGH). His38 (proton donor) is an active-site residue. Gln62 contributes to the (R)-pantoate binding site. Gln62 contributes to the beta-alanine binding site. 148–151 (GEKD) is a binding site for ATP. A (R)-pantoate-binding site is contributed by Gln154. Residues Val177 and 185 to 188 (LSSR) contribute to the ATP site.

The protein belongs to the pantothenate synthetase family. In terms of assembly, homodimer.

It is found in the cytoplasm. It catalyses the reaction (R)-pantoate + beta-alanine + ATP = (R)-pantothenate + AMP + diphosphate + H(+). Its pathway is cofactor biosynthesis; (R)-pantothenate biosynthesis; (R)-pantothenate from (R)-pantoate and beta-alanine: step 1/1. Its function is as follows. Catalyzes the condensation of pantoate with beta-alanine in an ATP-dependent reaction via a pantoyl-adenylate intermediate. In Cereibacter sphaeroides (strain ATCC 17023 / DSM 158 / JCM 6121 / CCUG 31486 / LMG 2827 / NBRC 12203 / NCIMB 8253 / ATH 2.4.1.) (Rhodobacter sphaeroides), this protein is Pantothenate synthetase.